The primary structure comprises 389 residues: Tryptophan synthase beta chain (389 aa).

An N6-(pyridoxal phosphate)lysine modification is found at K84.

It belongs to the TrpB family. As to quaternary structure, tetramer of two alpha and two beta chains. Requires pyridoxal 5'-phosphate as cofactor.

It catalyses the reaction (1S,2R)-1-C-(indol-3-yl)glycerol 3-phosphate + L-serine = D-glyceraldehyde 3-phosphate + L-tryptophan + H2O. It functions in the pathway amino-acid biosynthesis; L-tryptophan biosynthesis; L-tryptophan from chorismate: step 5/5. Functionally, the beta subunit is responsible for the synthesis of L-tryptophan from indole and L-serine. The protein is Tryptophan synthase beta chain of Clostridium novyi (strain NT).